The following is a 125-amino-acid chain: Ribonuclease P protein component (125 aa).

The protein belongs to the RnpA family. As to quaternary structure, consists of a catalytic RNA component (M1 or rnpB) and a protein subunit.

The catalysed reaction is Endonucleolytic cleavage of RNA, removing 5'-extranucleotides from tRNA precursor.. Functionally, RNaseP catalyzes the removal of the 5'-leader sequence from pre-tRNA to produce the mature 5'-terminus. It can also cleave other RNA substrates such as 4.5S RNA. The protein component plays an auxiliary but essential role in vivo by binding to the 5'-leader sequence and broadening the substrate specificity of the ribozyme. The protein is Ribonuclease P protein component of Rhodococcus jostii (strain RHA1).